The sequence spans 439 residues: Putrescine transporter PotE (439 aa).

Transmembrane regions (helical) follow at residues 10 to 30 (GVVQ…IIML), 40 to 60 (ISII…WAFA), 91 to 111 (TYGV…VGYG), 114 to 134 (LLGA…VLWI), 152 to 172 (ITVW…WFWF), 186 to 206 (APFF…FLGL), 225 to 245 (IAVL…TNVI), 276 to 296 (VIMA…QFTI), 321 to 341 (APVQ…LMTI), 354 to 374 (NLAV…LVII), 387 to 407 (VANF…YSSG), and 410 to 430 (AMLY…LVSP).

This sequence belongs to the amino acid-polyamine-organocation (APC) superfamily. Basic amino acid/polyamine antiporter (APA) (TC 2.A.3.2) family.

It is found in the cell inner membrane. The catalysed reaction is putrescine(in) + H(+)(in) = putrescine(out) + H(+)(out). The enzyme catalyses putrescine(in) + L-ornithine(out) = putrescine(out) + L-ornithine(in). Catalyzes both the uptake and excretion of putrescine. The uptake of putrescine is dependent on the membrane potential and the excretion involves putrescine-ornithine antiporter activity. The sequence is that of Putrescine transporter PotE from Escherichia coli O6:H1 (strain CFT073 / ATCC 700928 / UPEC).